Consider the following 88-residue polypeptide: U-scoloptoxin(01)-Tl1a (88 aa).

The N-terminal stretch at 1-16 (MSVYGLLSLLIFIVLA) is a signal peptide. The Chitin-binding type-2 domain occupies 25-81 (GKDCSEKEEYLYDSSNCDIFYECDESLKPQRMMCGPGTGWNQDKLVCDFLTNIDCTR). Cysteine 58 and cysteine 71 are disulfide-bonded.

Belongs to the scoloptoxin-01 family. In terms of processing, contains 3 disulfide bonds. Expressed by the venom gland.

It is found in the secreted. This Thereuopoda longicornis (Long-legged centipede) protein is U-scoloptoxin(01)-Tl1a.